A 207-amino-acid polypeptide reads, in one-letter code: Large ribosomal subunit protein uL4 (207 aa).

Belongs to the universal ribosomal protein uL4 family. Part of the 50S ribosomal subunit.

In terms of biological role, one of the primary rRNA binding proteins, this protein initially binds near the 5'-end of the 23S rRNA. It is important during the early stages of 50S assembly. It makes multiple contacts with different domains of the 23S rRNA in the assembled 50S subunit and ribosome. Functionally, forms part of the polypeptide exit tunnel. The chain is Large ribosomal subunit protein uL4 from Erythrobacter litoralis (strain HTCC2594).